Consider the following 668-residue polypeptide: DNA ligase (668 aa).

NAD(+) contacts are provided by residues 37 to 41, 86 to 87, and E116; these read DAVYD and SM. K118 functions as the N6-AMP-lysine intermediate in the catalytic mechanism. Positions 139, 173, 288, and 312 each coordinate NAD(+). C406, C409, C424, and C429 together coordinate Zn(2+). A BRCT domain is found at 590-668; the sequence is APDNFFKEKT…EQEAIAKIEK (79 aa).

The protein belongs to the NAD-dependent DNA ligase family. LigA subfamily. The cofactor is Mg(2+). Requires Mn(2+) as cofactor.

The catalysed reaction is NAD(+) + (deoxyribonucleotide)n-3'-hydroxyl + 5'-phospho-(deoxyribonucleotide)m = (deoxyribonucleotide)n+m + AMP + beta-nicotinamide D-nucleotide.. DNA ligase that catalyzes the formation of phosphodiester linkages between 5'-phosphoryl and 3'-hydroxyl groups in double-stranded DNA using NAD as a coenzyme and as the energy source for the reaction. It is essential for DNA replication and repair of damaged DNA. The polypeptide is DNA ligase (Lactobacillus gasseri (strain ATCC 33323 / DSM 20243 / BCRC 14619 / CIP 102991 / JCM 1131 / KCTC 3163 / NCIMB 11718 / NCTC 13722 / AM63)).